Consider the following 1230-residue polypeptide: ATP-dependent helicase/nuclease subunit A (1230 aa).

The 477-residue stretch at 4-480 (RNWTGPQEAA…IDLSHNFRSR (477 aa)) folds into the UvrD-like helicase ATP-binding domain. 25–32 (AGAGSGKT) contacts ATP. Residues 517–799 (AQLEGSGPPV…RIMSIHQAKG (283 aa)) form the UvrD-like helicase C-terminal domain. Residues 535–554 (TSVGRDTAGTADDEPDRSDE) form a disordered region. Residues 545–554 (ADDEPDRSDE) are compositionally biased toward acidic residues.

It belongs to the helicase family. AddA subfamily. As to quaternary structure, heterodimer of AddA and AddB/RexB. Mg(2+) serves as cofactor.

It catalyses the reaction Couples ATP hydrolysis with the unwinding of duplex DNA by translocating in the 3'-5' direction.. The enzyme catalyses ATP + H2O = ADP + phosphate + H(+). In terms of biological role, the heterodimer acts as both an ATP-dependent DNA helicase and an ATP-dependent, dual-direction single-stranded exonuclease. Recognizes the chi site generating a DNA molecule suitable for the initiation of homologous recombination. The AddA nuclease domain is required for chi fragment generation; this subunit has the helicase and 3' -&gt; 5' nuclease activities. This is ATP-dependent helicase/nuclease subunit A from Desulforudis audaxviator (strain MP104C).